The chain runs to 137 residues: UPF0275 protein PM0489 (137 aa).

It belongs to the UPF0275 family.

This Pasteurella multocida (strain Pm70) protein is UPF0275 protein PM0489.